A 295-amino-acid chain; its full sequence is Inositol polyphosphate multikinase IPK2 (295 aa).

Residues 1–21 are disordered; that stretch reads MASDLRPPEHQVAGHRASADK.

The protein belongs to the inositol phosphokinase (IPK) family.

The enzyme catalyses 1D-myo-inositol 1,4,5-trisphosphate + 2 ATP = 1D-myo-inositol 1,3,4,5,6-pentakisphosphate + 2 ADP + 2 H(+). It carries out the reaction 1D-myo-inositol 1,3,4,6-tetrakisphosphate + ATP = 1D-myo-inositol 1,3,4,5,6-pentakisphosphate + ADP + H(+). Its function is as follows. Inositol phosphate kinase with a broad substrate specificity. Phosphorylates inositol 1,4,5-trisphosphate (Ins(1,4,5)P3), inositol 1,4,5,6-tetrakisphosphate (Ins(1,4,5,6)P4), inositol 1,3,4,5-tetrakisphosphate (Ins(1,3,4,5)P4), inositol 1,3,4,6-tetrakisphosphate (Ins(1,3,4,6)P4) and inositol 1,2,3,4,6-pentakisphosphate (Ins(1,2,3,4,6)P5) but not inositol 1,4-bisphosphate (Ins(1,4)P2), inositol 1,3,4-trisphosphate (Ins(1,3,4)P3), inositol 1,2,6-trisphosphate (Ins(1,2,6)P3), inositol 3,4,5,6-tetrakisphosphate (Ins(3,4,5,6)P4), inositol 1,3,4,5,6-pentakisphosphate (Ins(1,3,4,5,6)P5), inositol 1,2,4,5,6-pentakisphosphate (Ins(1,2,4,5,6)P5) or inositol hexakisphosphate (InsP6). Regulates pollen and root development probably through the regulation of InsP3-mediated calcium accumulation. In Oryza sativa subsp. indica (Rice), this protein is Inositol polyphosphate multikinase IPK2.